The primary structure comprises 274 residues: Glutamate--cysteine ligase regulatory subunit (274 aa).

Lys263 bears the N6-acetyllysine mark.

This sequence belongs to the aldo/keto reductase family. Glutamate--cysteine ligase light chain subfamily. In terms of assembly, heterodimer of a catalytic heavy chain and a regulatory light chain. As to expression, in all tissues examined. Highest levels in skeletal muscle.

The protein operates within sulfur metabolism; glutathione biosynthesis; glutathione from L-cysteine and L-glutamate: step 1/2. The chain is Glutamate--cysteine ligase regulatory subunit (GCLM) from Homo sapiens (Human).